Consider the following 342-residue polypeptide: Ferrochelatase (342 aa).

2 residues coordinate Fe cation: His-188 and Glu-268.

This sequence belongs to the ferrochelatase family.

It is found in the cytoplasm. The catalysed reaction is heme b + 2 H(+) = protoporphyrin IX + Fe(2+). The protein operates within porphyrin-containing compound metabolism; protoheme biosynthesis; protoheme from protoporphyrin-IX: step 1/1. Catalyzes the ferrous insertion into protoporphyrin IX. The protein is Ferrochelatase of Rickettsia typhi (strain ATCC VR-144 / Wilmington).